A 790-amino-acid polypeptide reads, in one-letter code: Mitochondrial intermediate peptidase (790 aa).

The transit peptide at 1 to 29 directs the protein to the mitochondrion; it reads MLKRLARNNSSPWICSRCLQQSQRQRRFN. Position 570 (H570) interacts with Zn(2+). The active site involves E571. Positions 574 and 577 each coordinate Zn(2+).

The protein belongs to the peptidase M3 family. Zn(2+) is required as a cofactor.

It localises to the mitochondrion matrix. The enzyme catalyses Release of an N-terminal octapeptide as second stage of processing of some proteins imported into the mitochondrion.. Cleaves proteins, imported into the mitochondrion, to their mature size. While most mitochondrial precursor proteins are processed to the mature form in one step by mitochondrial processing peptidase (MPP), the sequential cleavage by MIP of an octapeptide after initial processing by MPP is a required step for a subgroup of nuclear-encoded precursor proteins destined for the matrix or the inner membrane. This is Mitochondrial intermediate peptidase (OCT1) from Phaeosphaeria nodorum (strain SN15 / ATCC MYA-4574 / FGSC 10173) (Glume blotch fungus).